Consider the following 151-residue polypeptide: FAD synthase (151 aa).

Residues 9 to 10, 14 to 17, aspartate 96, and tyrosine 123 each bind ATP; these read TF and HPGH.

Belongs to the archaeal FAD synthase family. In terms of assembly, homodimer. Requires a divalent metal cation as cofactor.

The enzyme catalyses FMN + ATP + H(+) = FAD + diphosphate. Its pathway is cofactor biosynthesis; FAD biosynthesis; FAD from FMN: step 1/1. Catalyzes the transfer of the AMP portion of ATP to flavin mononucleotide (FMN) to produce flavin adenine dinucleotide (FAD) coenzyme. This is FAD synthase from Methanothermobacter thermautotrophicus (strain ATCC 29096 / DSM 1053 / JCM 10044 / NBRC 100330 / Delta H) (Methanobacterium thermoautotrophicum).